Reading from the N-terminus, the 226-residue chain is Phosphoglycolate phosphatase (226 aa).

The active-site Nucleophile is Asp-5. Residues Asp-5 and Asp-7 each coordinate Mg(2+). Lys-142 serves as a coordination point for substrate. Residues Asp-164 and Asp-168 each coordinate Mg(2+).

This sequence belongs to the archaeal SPP-like hydrolase family. The cofactor is Mg(2+).

The catalysed reaction is 2-phosphoglycolate + H2O = glycolate + phosphate. Functionally, catalyzes the dephosphorylation of 2-phosphoglycolate. The sequence is that of Phosphoglycolate phosphatase from Sulfurisphaera tokodaii (strain DSM 16993 / JCM 10545 / NBRC 100140 / 7) (Sulfolobus tokodaii).